Consider the following 270-residue polypeptide: Phosphate import ATP-binding protein PstB 2 (270 aa).

The region spanning 25–265 (LQAKDINIYY…PEKKQTEDYI (241 aa)) is the ABC transporter domain. 57–64 (GPSGCGKS) provides a ligand contact to ATP.

The protein belongs to the ABC transporter superfamily. Phosphate importer (TC 3.A.1.7) family. As to quaternary structure, the complex is composed of two ATP-binding proteins (PstB), two transmembrane proteins (PstC and PstA) and a solute-binding protein (PstS).

It is found in the cell membrane. It catalyses the reaction phosphate(out) + ATP + H2O = ADP + 2 phosphate(in) + H(+). Functionally, part of the ABC transporter complex PstSACB involved in phosphate import. Responsible for energy coupling to the transport system. This is Phosphate import ATP-binding protein PstB 2 from Shouchella clausii (strain KSM-K16) (Alkalihalobacillus clausii).